The chain runs to 396 residues: Beta-1,4-galactosyltransferase 3 (396 aa).

The Cytoplasmic segment spans residues 1–10 (MLRRLLERPC). A helical; Signal-anchor for type II membrane protein membrane pass occupies residues 11–31 (TLALLVGSQLAVMMYLSLGGF). Over 32–396 (RSLSALFGRE…ANHTAPHGSH (365 aa)) the chain is Lumenal. N57 carries N-linked (GlcNAc...) asparagine glycosylation. C80 and C122 are disulfide-bonded. 133–137 (PHRAR) is a binding site for UDP-alpha-D-galactose. N169 carries an N-linked (GlcNAc...) asparagine glycan. Residues 172–174 (FNR), 199–200 (VD), Y229, and W261 each bind UDP-alpha-D-galactose. A disulfide bridge connects residues C193 and C212. D200 is a binding site for Mn(2+). 263 to 266 (GEDD) lines the N-acetyl-D-glucosamine pocket. H294 is a Mn(2+) binding site. A UDP-alpha-D-galactose-binding site is contributed by 294 to 296 (HRG). R306 is a binding site for N-acetyl-D-glucosamine. An N-linked (GlcNAc...) asparagine glycan is attached at N340. The interval 341–396 (ITADIGTDPRGPRTSSGPHYPPGSSQAFRQEMLQRRPPARPGPLPTANHTAPHGSH) is disordered. The segment covering 353-368 (RTSSGPHYPPGSSQAF) has biased composition (polar residues). N-linked (GlcNAc...) asparagine glycosylation occurs at N388.

The protein belongs to the glycosyltransferase 7 family. Mn(2+) is required as a cofactor.

The protein localises to the golgi apparatus. The protein resides in the golgi stack membrane. It carries out the reaction an N-acetyl-beta-D-glucosaminyl derivative + UDP-alpha-D-galactose = a beta-D-galactosyl-(1-&gt;4)-N-acetyl-beta-D-glucosaminyl derivative + UDP + H(+). The enzyme catalyses N-acetyl-D-glucosamine + UDP-alpha-D-galactose = beta-D-galactosyl-(1-&gt;4)-N-acetyl-D-glucosamine + UDP + H(+). It catalyses the reaction a beta-D-GlcNAc-(1-&gt;3)-beta-D-Gal-(1-&gt;4)-beta-D-Glc-(1&lt;-&gt;1)-Cer(d18:1(4E)) + UDP-alpha-D-galactose = a neolactoside nLc4Cer(d18:1(4E)) + UDP + H(+). The catalysed reaction is a beta-D-glucosylceramide + UDP-alpha-D-galactose = a beta-D-galactosyl-(1-&gt;4)-beta-D-glucosyl-(1&lt;-&gt;1)-ceramide + UDP + H(+). It carries out the reaction a neolactoside IV(3)-beta-GlcNAc-nLc4Cer + UDP-alpha-D-galactose = a neolactoside nLc6Cer + UDP + H(+). It participates in protein modification; protein glycosylation. In terms of biological role, responsible for the synthesis of complex-type N-linked oligosaccharides in many glycoproteins as well as the carbohydrate moieties of glycolipids. The polypeptide is Beta-1,4-galactosyltransferase 3 (B4GALT3) (Bos taurus (Bovine)).